Consider the following 539-residue polypeptide: Chaperonin GroEL (539 aa).

ATP is bound by residues 30-33 (TLGP), 87-91 (DGTTT), Gly-414, 479-481 (DAL), and Asp-495.

The protein belongs to the chaperonin (HSP60) family. Forms a cylinder of 14 subunits composed of two heptameric rings stacked back-to-back. Interacts with the co-chaperonin GroES.

It is found in the cytoplasm. The catalysed reaction is ATP + H2O + a folded polypeptide = ADP + phosphate + an unfolded polypeptide.. Functionally, together with its co-chaperonin GroES, plays an essential role in assisting protein folding. The GroEL-GroES system forms a nano-cage that allows encapsulation of the non-native substrate proteins and provides a physical environment optimized to promote and accelerate protein folding. The sequence is that of Chaperonin GroEL from Caldicellulosiruptor saccharolyticus (strain ATCC 43494 / DSM 8903 / Tp8T 6331).